The primary structure comprises 518 residues: 3-octaprenyl-4-hydroxybenzoate carboxy-lyase (518 aa).

N177 contacts Mn(2+). Residues 180-182 (IYR), 194-196 (RWL), and 199-200 (RG) contribute to the prenylated FMN site. Position 243 (E243) interacts with Mn(2+). D318 serves as the catalytic Proton donor.

It belongs to the UbiD family. Homohexamer. The cofactor is prenylated FMN. It depends on Mn(2+) as a cofactor.

It localises to the cell membrane. It carries out the reaction a 4-hydroxy-3-(all-trans-polyprenyl)benzoate + H(+) = a 2-(all-trans-polyprenyl)phenol + CO2. Its pathway is cofactor biosynthesis; ubiquinone biosynthesis. Catalyzes the decarboxylation of 3-octaprenyl-4-hydroxy benzoate to 2-octaprenylphenol, an intermediate step in ubiquinone biosynthesis. In Burkholderia multivorans (strain ATCC 17616 / 249), this protein is 3-octaprenyl-4-hydroxybenzoate carboxy-lyase.